We begin with the raw amino-acid sequence, 75 residues long: Large ribosomal subunit protein bL31 (75 aa).

This sequence belongs to the bacterial ribosomal protein bL31 family. Type A subfamily. As to quaternary structure, part of the 50S ribosomal subunit.

Binds the 23S rRNA. The chain is Large ribosomal subunit protein bL31 from Chlorobium luteolum (strain DSM 273 / BCRC 81028 / 2530) (Pelodictyon luteolum).